The following is a 317-amino-acid chain: 2,3-dihydroxyphenylpropionate/2,3-dihydroxicinnamic acid 1,2-dioxygenase 2 (317 aa).

The active-site Proton donor is H115. The active-site Proton acceptor is H179.

Belongs to the LigB/MhpB extradiol dioxygenase family. Homotetramer. Fe(2+) serves as cofactor.

The enzyme catalyses 3-(2,3-dihydroxyphenyl)propanoate + O2 = (2Z,4E)-2-hydroxy-6-oxonona-2,4-dienedioate + H(+). The catalysed reaction is (2E)-3-(2,3-dihydroxyphenyl)prop-2-enoate + O2 = (2Z,4E,7E)-2-hydroxy-6-oxonona-2,4,7-trienedioate + H(+). It functions in the pathway aromatic compound metabolism; 3-phenylpropanoate degradation. In terms of biological role, catalyzes the non-heme iron(II)-dependent oxidative cleavage of 2,3-dihydroxyphenylpropionic acid and 2,3-dihydroxicinnamic acid into 2-hydroxy-6-ketononadienedioate and 2-hydroxy-6-ketononatrienedioate, respectively. In Dechloromonas aromatica (strain RCB), this protein is 2,3-dihydroxyphenylpropionate/2,3-dihydroxicinnamic acid 1,2-dioxygenase 2.